The chain runs to 691 residues: Replication and transcription activator (691 aa).

2 O-linked (GlcNAc) threonine; by host glycosylation sites follow: T366 and T367. Disordered regions lie at residues 482–582 and 626–677; these read EASG…SLPP and LDTP…QESG. The segment covering 504–513 has biased composition (low complexity); the sequence is TAAATAAEAT. The segment covering 515–531 has biased composition (basic residues); that stretch reads PKRKQRSKERSSKKRKA. The span at 539–556 shows a compositional bias: low complexity; it reads TTPSTTTPGTSLGSITTP. The segment covering 655–677 has biased composition (polar residues); the sequence is EYTQLQPVRATSATPANEVQESG.

Belongs to the herpesviridae TAF50 family. In terms of assembly, homotetramer. Interacts with KTA/ORF57. Interacts with host PARP1; this interaction negatively regulates RTA/ORF50 transactivation activity. Interacts with host SMC5 and SMC6; these interactions remove the repressive chromatin structure to allow viral reactivation. Interacts with host POU2F1; this interaction enhances RTA/ORF50-mediated transactivation of several viral promoters including K-bZIP promoter.

The protein localises to the host nucleus. It carries out the reaction S-ubiquitinyl-[E2 ubiquitin-conjugating enzyme]-L-cysteine + [acceptor protein]-L-lysine = [E2 ubiquitin-conjugating enzyme]-L-cysteine + N(6)-ubiquitinyl-[acceptor protein]-L-lysine.. Functionally, transcriptional transactivator that is necessary and sufficient for reactivation of the virus from latency. Acts post-transcriptionally and transcriptionally to regulate viral lytic gene expression and synergistically with ORF57 activates certain early and late viral promoters including its own promoter. Autostimulation on its promoter is mediated by the formation of a ternary complex between ORF50 and the cellular components HGMB1 and POU2F1. Also possesses a bimodal activity in targeting proteins for degradation through using its own E3 ligase activity or by stabilizing and chaperoning host E3 ligases. These activities help to subvert the host innate and adaptive immune responses while also modulating the host transcriptome and protein landscape to promote virus production. For instance, targets the host SMC5/6 complex for ubiquitination and subsequent degradation through the ubiquitin-proteasome during reactivation while during latency, host SMC5/6 complex binds to the viral episome and condenses viral chromatin, creating a repressive chromatin structure to silence genome transcription. Hijacks the cellular E3 ligase complex RNF20/40 to increase the level of transcriptionally active RNA polymerase II on viral gene promoters thereby facilitating lytic gene expression. Acts as a SUMO-targeting ubiquitin ligase and affects general sumoylation of cellular proteins. Promotes the polyubiquitination and subsequent degradation of host MYD88 and thereby inhibits MYD88-mediated TLR4 signaling. Induces the degradation of vFLIP/ORF71 together with cellular ubiquitin ligase ITCH to prevent vFLIP-induced NF-kappa-B signaling. The sequence is that of Replication and transcription activator (ORF50) from Homo sapiens (Human).